Reading from the N-terminus, the 994-residue chain is Bifunctional glutamine synthetase adenylyltransferase/adenylyl-removing enzyme (994 aa).

Residues 1–487 form an adenylyl removase region; it reads MVVTKLATQR…LHTKLFYQPL (487 aa). Residues 492-994 form an adenylyl transferase region; that stretch reads GPTGLEIAHG…KAVVRKVFGS (503 aa).

Belongs to the GlnE family. Mg(2+) serves as cofactor.

It catalyses the reaction [glutamine synthetase]-O(4)-(5'-adenylyl)-L-tyrosine + phosphate = [glutamine synthetase]-L-tyrosine + ADP. The catalysed reaction is [glutamine synthetase]-L-tyrosine + ATP = [glutamine synthetase]-O(4)-(5'-adenylyl)-L-tyrosine + diphosphate. Its function is as follows. Involved in the regulation of glutamine synthetase GlnA, a key enzyme in the process to assimilate ammonia. When cellular nitrogen levels are high, the C-terminal adenylyl transferase (AT) inactivates GlnA by covalent transfer of an adenylyl group from ATP to specific tyrosine residue of GlnA, thus reducing its activity. Conversely, when nitrogen levels are low, the N-terminal adenylyl removase (AR) activates GlnA by removing the adenylyl group by phosphorolysis, increasing its activity. The regulatory region of GlnE binds the signal transduction protein PII (GlnB) which indicates the nitrogen status of the cell. This chain is Bifunctional glutamine synthetase adenylyltransferase/adenylyl-removing enzyme, found in Mycobacterium bovis (strain ATCC BAA-935 / AF2122/97).